Reading from the N-terminus, the 311-residue chain is Terpentetriene synthase (311 aa).

A DDXXD motif motif is present at residues Asp-77–Asp-81.

The protein belongs to the terpene synthase family. In terms of assembly, homodimer. Requires Mg(2+) as cofactor.

It catalyses the reaction terpentedienyl diphosphate = terpentetriene + diphosphate. It participates in antibiotic biosynthesis. Involved in the production of the isoprenoid antibiotic terpentecin. Converts terpentedienol diphosphate (TDP) into terpentetriene (TTE). Can also accept geranylgeranyl diphosphate (GGDP) and farnesyl diphosphate (FDP) as substrates. The polypeptide is Terpentetriene synthase (cyc2) (Kitasatospora griseola (Streptomyces griseolosporeus)).